We begin with the raw amino-acid sequence, 40 residues long: Photosystem II reaction center protein J (40 aa).

Residues 8 to 28 (IPLWIIGTVAGIVVIGLIGLF) form a helical membrane-spanning segment.

It belongs to the PsbJ family. As to quaternary structure, PSII is composed of 1 copy each of membrane proteins PsbA, PsbB, PsbC, PsbD, PsbE, PsbF, PsbH, PsbI, PsbJ, PsbK, PsbL, PsbM, PsbT, PsbX, PsbY, PsbZ, Psb30/Ycf12, at least 3 peripheral proteins of the oxygen-evolving complex and a large number of cofactors. It forms dimeric complexes.

Its subcellular location is the plastid. The protein localises to the chloroplast thylakoid membrane. Functionally, one of the components of the core complex of photosystem II (PSII). PSII is a light-driven water:plastoquinone oxidoreductase that uses light energy to abstract electrons from H(2)O, generating O(2) and a proton gradient subsequently used for ATP formation. It consists of a core antenna complex that captures photons, and an electron transfer chain that converts photonic excitation into a charge separation. This chain is Photosystem II reaction center protein J, found in Pisum sativum (Garden pea).